Reading from the N-terminus, the 375-residue chain is MVDNSKTRVVVGMSGGVDSSVSALLLKQQGYDVVGVFMKNWDDTDDSGVCTATEDYEDVKKVADKIGIPYYSINFEKEYWHRVFEYFLNEYKKGRTPNPDVMCNSQIKFKSFLDFAMDLDADYIAMGHYAKTVKDADGLTHMMRPKDGNKDQTYFLSQLNQDQIKKVIFPLANLTKPQVREIALANGLATAKKKDSTGICFIGERNFRKFLSEFLPAKSGKMVTPDGKVVGEHAGLMYYTIGQRQGLGLGSTKESTDPWFVVGKDLKKNELIVEQGYDSKLLYASRLKASDMSFFTGKPDHDVEFHCSAKFRYRQCDVGVTVKYHADDNTADVYFDEPARAVTPGQALVLYQGEECLGGGNIDAAYQEDKQLQLV.

Residues 12–19 (GMSGGVDS) and Met-38 contribute to the ATP site. Positions 98 to 100 (NPD) are interaction with target base in tRNA. The active-site Nucleophile is the Cys-103. Cys-103 and Cys-200 are oxidised to a cystine. Gly-127 contributes to the ATP binding site. Residues 150-152 (KDQ) are interaction with tRNA. Catalysis depends on Cys-200, which acts as the Cysteine persulfide intermediate. Residues 312–313 (RY) are interaction with tRNA.

This sequence belongs to the MnmA/TRMU family.

It localises to the cytoplasm. It carries out the reaction S-sulfanyl-L-cysteinyl-[protein] + uridine(34) in tRNA + AH2 + ATP = 2-thiouridine(34) in tRNA + L-cysteinyl-[protein] + A + AMP + diphosphate + H(+). Catalyzes the 2-thiolation of uridine at the wobble position (U34) of tRNA, leading to the formation of s(2)U34. This Lactobacillus helveticus (strain DPC 4571) protein is tRNA-specific 2-thiouridylase MnmA.